The primary structure comprises 386 residues: 4-hydroxy-3-methylbut-2-en-1-yl diphosphate synthase (flavodoxin) (386 aa).

4 residues coordinate [4Fe-4S] cluster: C289, C292, C324, and E331.

The protein belongs to the IspG family. Requires [4Fe-4S] cluster as cofactor.

The catalysed reaction is (2E)-4-hydroxy-3-methylbut-2-enyl diphosphate + oxidized [flavodoxin] + H2O + 2 H(+) = 2-C-methyl-D-erythritol 2,4-cyclic diphosphate + reduced [flavodoxin]. Its pathway is isoprenoid biosynthesis; isopentenyl diphosphate biosynthesis via DXP pathway; isopentenyl diphosphate from 1-deoxy-D-xylulose 5-phosphate: step 5/6. Converts 2C-methyl-D-erythritol 2,4-cyclodiphosphate (ME-2,4cPP) into 1-hydroxy-2-methyl-2-(E)-butenyl 4-diphosphate. This Nitratidesulfovibrio vulgaris (strain ATCC 29579 / DSM 644 / CCUG 34227 / NCIMB 8303 / VKM B-1760 / Hildenborough) (Desulfovibrio vulgaris) protein is 4-hydroxy-3-methylbut-2-en-1-yl diphosphate synthase (flavodoxin).